The following is a 391-amino-acid chain: Acetate kinase (391 aa).

N7 contributes to the Mg(2+) binding site. Residue K14 participates in ATP binding. Residue R88 coordinates substrate. The active-site Proton donor/acceptor is D145. Residues 203–207 (HAGNG), 278–280 (DAR), and 326–330 (GMGEN) contribute to the ATP site. A Mg(2+)-binding site is contributed by E378.

It belongs to the acetokinase family. As to quaternary structure, homodimer. Mg(2+) serves as cofactor. Requires Mn(2+) as cofactor.

The protein resides in the cytoplasm. It carries out the reaction acetate + ATP = acetyl phosphate + ADP. It functions in the pathway metabolic intermediate biosynthesis; acetyl-CoA biosynthesis; acetyl-CoA from acetate: step 1/2. Its function is as follows. Catalyzes the formation of acetyl phosphate from acetate and ATP. Can also catalyze the reverse reaction. The sequence is that of Acetate kinase from Phytoplasma mali (strain AT).